Reading from the N-terminus, the 274-residue chain is MQFSKMHGLGNDFMVIDGVTQNVYLTEDMIRKLADRHYGVGFDQLLLVEPPYDPELDFHYRIFNADGSEVAQCGNGARCFARFVSLKGLINRSDMYVSTAKGKMVLTLVDEENVRVNMGEPIWEPAKIPFIANKFEKNYILRTDLQTVLCGVVSMGNPHCVLQVDDIEQATVHQLGALLEKHHRFPERANVGFMQIIDRHHIKLRVFERGVGETKACGSGACAAVAVGIMQGVLDANVQVSLPGGTLQIEWQGKGKPLYMTGTATHIYDGFIKL.

The substrate site is built by N11, Q44, and N64. The active-site Proton donor is the C73. Residues 74–75, N157, N190, and 208–209 each bind substrate; these read GN and ER. C217 (proton acceptor) is an active-site residue. Substrate is bound at residue 218–219; the sequence is GS.

Belongs to the diaminopimelate epimerase family. In terms of assembly, homodimer.

It localises to the cytoplasm. It catalyses the reaction (2S,6S)-2,6-diaminopimelate = meso-2,6-diaminopimelate. Its pathway is amino-acid biosynthesis; L-lysine biosynthesis via DAP pathway; DL-2,6-diaminopimelate from LL-2,6-diaminopimelate: step 1/1. In terms of biological role, catalyzes the stereoinversion of LL-2,6-diaminopimelate (L,L-DAP) to meso-diaminopimelate (meso-DAP), a precursor of L-lysine and an essential component of the bacterial peptidoglycan. This is Diaminopimelate epimerase from Haemophilus ducreyi (strain 35000HP / ATCC 700724).